A 510-amino-acid chain; its full sequence is 2,3-bisphosphoglycerate-independent phosphoglycerate mutase (510 aa).

D12 contributes to the Mn(2+) binding site. At Y36 the chain carries Phosphotyrosine. S62 is a Mn(2+) binding site. S62 serves as the catalytic Phosphoserine intermediate. Residues H123, 153-154 (RD), R185, R191, 261-264 (RPDR), and K336 contribute to the substrate site. 5 residues coordinate Mn(2+): D403, H407, D444, H445, and H462.

It belongs to the BPG-independent phosphoglycerate mutase family. Monomer. Requires Mn(2+) as cofactor.

The enzyme catalyses (2R)-2-phosphoglycerate = (2R)-3-phosphoglycerate. Its pathway is carbohydrate degradation; glycolysis; pyruvate from D-glyceraldehyde 3-phosphate: step 3/5. Functionally, essential for rapid growth and for sporulation. Catalyzes the interconversion of 2-phosphoglycerate and 3-phosphoglycerate. This is 2,3-bisphosphoglycerate-independent phosphoglycerate mutase from Halalkalibacterium halodurans (strain ATCC BAA-125 / DSM 18197 / FERM 7344 / JCM 9153 / C-125) (Bacillus halodurans).